We begin with the raw amino-acid sequence, 341 residues long: MNNPIPSNLKSEAKKAAKILREFTEITSRNGPDKIIPAHVIAKAKGLAILSVIKAGFLVTARGGSGIVLARLPDGKWSAPSAIGIAGLGGGFELGIEVSDLVIILNYDRAVEAFAKGGNLTLGGNLTVAVGPLGRNLEGNVSLRSSAAVFTYCKSRGLFAGISLEGSCLIERKETNRKFYCQDIRAYDILFGDITRPAQAEDLYEVLDSFTEKYEIEGQRVNARRAAREQKKASAKLPPKPSSRPEQSSAQVQLSSGSQSSRNEYNLYPELSSYRERVGNSNQPIEVTALYSFEGQQPGDLNFQAGDRITVISKTDSHFDWWEGKLRGRTGIFPANYVTMN.

The interval 221–265 (VNARRAAREQKKASAKLPPKPSSRPEQSSAQVQLSSGSQSSRNEY) is disordered. A compositionally biased stretch (polar residues) spans 246 to 264 (EQSSAQVQLSSGSQSSRNE). The SH3 domain occupies 282-341 (NQPIEVTALYSFEGQQPGDLNFQAGDRITVISKTDSHFDWWEGKLRGRTGIFPANYVTMN).

This sequence belongs to the SH3YL1 family. Interacts with SH3D19.

The protein is SH3 domain-containing YSC84-like protein 1 (SH3YL1) of Bos taurus (Bovine).